Reading from the N-terminus, the 378-residue chain is tRNA-specific 2-thiouridylase MnmA (378 aa).

ATP contacts are provided by residues 9–16 and Met-35; that span reads GVSGGVDS. Positions 94–96 are interaction with target base in tRNA; sequence NPD. The Nucleophile role is filled by Cys-99. Cys-99 and Cys-195 are oxidised to a cystine. Gly-123 provides a ligand contact to ATP. The segment at 145-147 is interaction with tRNA; it reads KDQ. Cys-195 functions as the Cysteine persulfide intermediate in the catalytic mechanism. The segment at 307–308 is interaction with tRNA; it reads RY.

It belongs to the MnmA/TRMU family.

It localises to the cytoplasm. The enzyme catalyses S-sulfanyl-L-cysteinyl-[protein] + uridine(34) in tRNA + AH2 + ATP = 2-thiouridine(34) in tRNA + L-cysteinyl-[protein] + A + AMP + diphosphate + H(+). In terms of biological role, catalyzes the 2-thiolation of uridine at the wobble position (U34) of tRNA, leading to the formation of s(2)U34. This Xanthomonas euvesicatoria pv. vesicatoria (strain 85-10) (Xanthomonas campestris pv. vesicatoria) protein is tRNA-specific 2-thiouridylase MnmA.